Here is a 243-residue protein sequence, read N- to C-terminus: Terpene cyclase janB (243 aa).

A run of 7 helical transmembrane segments spans residues 19-39, 48-68, 77-97, 112-132, 134-154, 172-194, and 205-225; these read LADLFVLGMGLGWVINYVGMV, YGMAIMPLCCNIAWEIVYCVF, LGVFAMGLLINFGVMYAAIIF, LPWIFCIGVLGFLTGHLALAA, IGPSLAYSWGAVVCQLLLSVG, LWLSRFLGSCCTVGFASLRWMYW, and LVLWSLAVFLMVDGSYGVCFW.

This sequence belongs to the paxB family.

It localises to the membrane. It functions in the pathway secondary metabolite biosynthesis. Terpene cyclase; part of the gene cluster that mediates the biosynthesis of the indole diterpenes janthitremanes such as shearinine K or shearinine A. The geranylgeranyl diphosphate (GGPP) synthase janG catalyzes the first step in janthitremane biosynthesis via conversion of farnesyl pyrophosphate and isopentyl pyrophosphate into geranylgeranyl pyrophosphate (GGPP). Condensation of indole-3-glycerol phosphate with GGPP by the prenyl transferase janC then forms 3-geranylgeranylindole (3-GGI). Epoxidation by the FAD-dependent monooxygenase janM leads to a epoxidized-GGI that is substrate of the terpene cyclase janB for cyclization to yield paspaline. Paspaline is subsequently converted to 13-desoxypaspaline by the cytochrome P450 monooxygenase janP, via beta-PC-M6 in a series of alpha-face oxidations. The cytochrome P450 monooxygenase janQ is proposed to carry out sequential beta-face oxidation steps at C-7 and C-13 of 13-desoxypaspaline to form paspalicine and paspalinine respectively. The indole diterpene prenyltransferase janD may then convert paspalinine into shearinine K which is substrate of janO and/or additional enzymes for oxidation and cyclization to generate shearinine A. The chain is Terpene cyclase janB from Penicillium janthinellum (Penicillium vitale).